The following is a 150-amino-acid chain: uncharacterized protein (150 aa).

Polar residues predominate over residues 81–90 (TTKPSCSFAQ). Positions 81-125 (TTKPSCSFAQPVTPRTREGAGVRGHRRRRRGSLSLIPWKTSNDKQ) are disordered.

This is an uncharacterized protein from Homo sapiens (Human).